The following is a 224-amino-acid chain: Urease accessory protein UreG (224 aa).

The span at 1-20 (MATHSHPHSHTVPARPRRVR) shows a compositional bias: basic residues. Residues 1–25 (MATHSHPHSHTVPARPRRVRKPGEP) form a disordered region. Position 32–39 (32–39 (GPVGSGKT)) interacts with GTP.

It belongs to the SIMIBI class G3E GTPase family. UreG subfamily. As to quaternary structure, homodimer. UreD, UreF and UreG form a complex that acts as a GTP-hydrolysis-dependent molecular chaperone, activating the urease apoprotein by helping to assemble the nickel containing metallocenter of UreC. The UreE protein probably delivers the nickel.

Its subcellular location is the cytoplasm. Its function is as follows. Facilitates the functional incorporation of the urease nickel metallocenter. This process requires GTP hydrolysis, probably effectuated by UreG. This Mycobacterium bovis (strain ATCC BAA-935 / AF2122/97) protein is Urease accessory protein UreG.